A 405-amino-acid chain; its full sequence is Glucose-1-phosphate adenylyltransferase 1 (405 aa).

Residues tyrosine 96, glycine 161, glutamate 176–lysine 177, and serine 194 each bind alpha-D-glucose 1-phosphate.

Belongs to the bacterial/plant glucose-1-phosphate adenylyltransferase family. In terms of assembly, homotetramer.

It carries out the reaction alpha-D-glucose 1-phosphate + ATP + H(+) = ADP-alpha-D-glucose + diphosphate. It participates in glycan biosynthesis; glycogen biosynthesis. Functionally, involved in the biosynthesis of ADP-glucose, a building block required for the elongation reactions to produce glycogen. Catalyzes the reaction between ATP and alpha-D-glucose 1-phosphate (G1P) to produce pyrophosphate and ADP-Glc. The sequence is that of Glucose-1-phosphate adenylyltransferase 1 from Vibrio vulnificus (strain YJ016).